The chain runs to 224 residues: Putative MgpC-like protein MPN_150 (224 aa).

The protein belongs to the MgpC family.

In Mycoplasma pneumoniae (strain ATCC 29342 / M129 / Subtype 1) (Mycoplasmoides pneumoniae), this protein is Putative MgpC-like protein MPN_150.